Here is a 399-residue protein sequence, read N- to C-terminus: Arylacetamide deacetylase (399 aa).

Residues 1-4 lie on the Cytoplasmic side of the membrane; that stretch reads MRKK. Residues 5–25 traverse the membrane as a helical; Signal-anchor for type II membrane protein segment; the sequence is YFGFLILGVLLAGYIYVPLPD. The Lumenal portion of the chain corresponds to 26 to 399; sequence NVEEPWKIML…QYINWLHENL (374 aa). The short motif at 111–113 is the Involved in the stabilization of the negatively charged intermediate by the formation of the oxyanion hole element; it reads HGG. Residues Cys116 and Cys340 are joined by a disulfide bond. The active site involves Ser189. N-linked (GlcNAc...) asparagine glycosylation occurs at Asn282. Catalysis depends on residues Asp343 and His373.

Belongs to the 'GDXG' lipolytic enzyme family.

The protein resides in the endoplasmic reticulum membrane. The protein localises to the microsome membrane. The enzyme catalyses a triacylglycerol + H2O = a diacylglycerol + a fatty acid + H(+). Functionally, displays cellular triglyceride lipase activity in liver, increases the levels of intracellular fatty acids derived from the hydrolysis of newly formed triglyceride stores and plays a role in very low-density lipoprotein assembly. Displays serine esterase activity in liver. Deacetylates a variety of arylacetamide substrates, including xenobiotic compounds and procarcinogens, converting them to the primary arylamide compounds and increasing their toxicity. In Bos taurus (Bovine), this protein is Arylacetamide deacetylase (AADAC).